A 281-amino-acid chain; its full sequence is 2-dehydro-3-deoxyphosphooctonate aldolase (281 aa).

It belongs to the KdsA family.

The protein resides in the cytoplasm. The enzyme catalyses D-arabinose 5-phosphate + phosphoenolpyruvate + H2O = 3-deoxy-alpha-D-manno-2-octulosonate-8-phosphate + phosphate. The protein operates within carbohydrate biosynthesis; 3-deoxy-D-manno-octulosonate biosynthesis; 3-deoxy-D-manno-octulosonate from D-ribulose 5-phosphate: step 2/3. Its pathway is bacterial outer membrane biogenesis; lipopolysaccharide biosynthesis. The protein is 2-dehydro-3-deoxyphosphooctonate aldolase of Hahella chejuensis (strain KCTC 2396).